Reading from the N-terminus, the 75-residue chain is Protein Tlp homolog (75 aa).

Belongs to the Tlp family.

This chain is Protein Tlp homolog, found in Clostridium acetobutylicum (strain ATCC 824 / DSM 792 / JCM 1419 / IAM 19013 / LMG 5710 / NBRC 13948 / NRRL B-527 / VKM B-1787 / 2291 / W).